The following is a 593-amino-acid chain: Methylenetetrahydrofolate reductase (NADH) 1 (593 aa).

The Proton donor/acceptor role is filled by Glu21. Residues 21-26 (EYFPPK) and 52-53 (TW) each bind NAD(+). FAD is bound by residues 52–53 (TW), His81, 111–113 (RGD), Tyr153, 157–160 (HPDA), Asp175, and Lys182. Asp113 serves as a coordination point for substrate. Residues Gln193 and Tyr285 each coordinate substrate.

It belongs to the methylenetetrahydrofolate reductase family. Homodimer. Requires FAD as cofactor.

It catalyses the reaction (6S)-5-methyl-5,6,7,8-tetrahydrofolate + NAD(+) = (6R)-5,10-methylene-5,6,7,8-tetrahydrofolate + NADH + H(+). The protein operates within one-carbon metabolism; tetrahydrofolate interconversion. Plant MTHFRs strongly prefer NADH over NADPH. Not inhibited by methionine or S-adenosylmethionine. Its function is as follows. The probable reversibility of the MTHFR reaction in plants suggests that they can metabolize the methyl group of 5,10-methylenetetrahydrofolate to serine, sugars and starch. The protein is Methylenetetrahydrofolate reductase (NADH) 1 of Zea mays (Maize).